A 962-amino-acid polypeptide reads, in one-letter code: MTKQTLTELEQHELFLTRHIGPDADEQQAMLNYVGAESLEDLTAQIVPESIRLGRELNVGASNGEAAGLAYIRQLADKNQVFKSYIGMGYHGTEVPNVILRNVLENPGWYTAYTPYQPEIAQGRLEAILNFQQLSIDLTGLDLASASLLDEATAAAEAMALAKRVSKAKKANTFFVADDVFPQTLDVVKTRAECFGFDIVTGPAAEAANHDDLFGALFQYTNRQGQLTDFTELFAQLRAKNVIVTVGADIMSLVLLKSPGAMGADVVFGSAQRFGVPMGFGGPHAAFFVSKDEHKRSMPGRIIGVSKDTRGKTALRMAMQTREQHIRREKANSNICTAQVLLANMASFYAVFHGPQGLKVIANRIHRLTDILAAGLAAKGVTVLNTQWFDTLSFKVDVDAVRARALAAGVNLRYDADGVVGVSLAETTTRADVAELFDIILGAGHGLDVAAIDADILAKGSSSIPAALVREEAFLTHPTFNSYHSETEMMRYIKRLENKDLALNHSMISLGSCTMKLNAAVEMIPVSWPEFANMHPFCPSEQAQGYTQLIGELSDWLVDITGYDAVCMQPNSGAQGEYAGLLAIRKYHESRGEGHRDVCLIPQSAHGTNPASAQLAGMKVVVTACDKQGNVDLDDLRAKAAEVAENLSCIMITYPSTHGVYEETVREICDIIHQHGGQVYLDGANMNAQVGLTAPGFIGADVSHLNLHKTFAIPHGGGGPGMGPIGVKKHLAPFVAGHAVVKQGIESDNNGAVSAAPFGSAGILPISWMYIKLLGSKGLKQSTQTAMLNANYLTKKLSEHYPVLYRGRNDRIAHECIIDMRPLKEASGVTEMDVAKRLNDYGFHAPTMSFPVAGTLMIEPTESESKAELDRFIEAMVAIRGEIARVESGEWPVDNNPLANAPHTMDDIMDPAFDSRPYSRELAVFPTESVRANKFWPTVNRIDDVYGDRNLFCACVPMSDYE.

Residue lysine 709 is modified to N6-(pyridoxal phosphate)lysine.

The protein belongs to the GcvP family. The glycine cleavage system is composed of four proteins: P, T, L and H. Pyridoxal 5'-phosphate is required as a cofactor.

It catalyses the reaction N(6)-[(R)-lipoyl]-L-lysyl-[glycine-cleavage complex H protein] + glycine + H(+) = N(6)-[(R)-S(8)-aminomethyldihydrolipoyl]-L-lysyl-[glycine-cleavage complex H protein] + CO2. Functionally, the glycine cleavage system catalyzes the degradation of glycine. The P protein binds the alpha-amino group of glycine through its pyridoxal phosphate cofactor; CO(2) is released and the remaining methylamine moiety is then transferred to the lipoamide cofactor of the H protein. This is Glycine dehydrogenase (decarboxylating) from Shewanella amazonensis (strain ATCC BAA-1098 / SB2B).